A 492-amino-acid chain; its full sequence is Diacylglycerol kinase 7 (492 aa).

Residues alanine 90–serine 248 enclose the DAGKc domain.

This sequence belongs to the eukaryotic diacylglycerol kinase family. Monomer. Highly expressed in flowers, and at low levels in roots, stems and leaves.

The enzyme catalyses a 1,2-diacyl-sn-glycerol + ATP = a 1,2-diacyl-sn-glycero-3-phosphate + ADP + H(+). Phosphorylates the second messenger diacylglycerol (DAG) to generate phosphatidic acid (PA), another important signaling molecule. PA is required for plant development and responses to abiotic stress and pathogen attack. May be involved in the accumulation of PA during cold stress xhibits high specificity for 1,2-dioleoyl-sn-glycerol (1,2-DOG), 1-palmitoyl, 2-oleoyl-sn-glycerol (1,2 POG), 1-stearoyl, 2-linoleoyl-sn-glycerol (1,2-SLG) and 1-oleoyl, 2-palmitoyl-sn-glycerol (1,2-OPG). The sequence is that of Diacylglycerol kinase 7 (DGK7) from Arabidopsis thaliana (Mouse-ear cress).